The sequence spans 183 residues: Integrase-like protein y4lS (183 aa).

A Resolvase/invertase-type recombinase catalytic domain is found at Ala-2–Gly-136.

It belongs to the site-specific recombinase resolvase family.

This is Integrase-like protein y4lS from Sinorhizobium fredii (strain NBRC 101917 / NGR234).